The primary structure comprises 30 residues: Kalata-B14 (30 aa).

A cross-link (cyclopeptide (Gly-Asp)) is located at residues 1–30 (GLPVCGESCFGGTCNTPGCACDPWPVCTRD). Intrachain disulfides connect C5-C19, C9-C21, and C14-C27.

This is a cyclic peptide.

In terms of biological role, probably participates in a plant defense mechanism. In Oldenlandia affinis, this protein is Kalata-B14.